A 689-amino-acid chain; its full sequence is DNA topoisomerase 1 (689 aa).

In terms of domain architecture, Toprim spans aspartate 3 to isoleucine 113. The Mg(2+) site is built by glutamate 9 and aspartate 82. Residues glutamate 129–glutamate 557 form the Topo IA-type catalytic domain. The interval serine 163–glutamine 168 is interaction with DNA. The active-site O-(5'-phospho-DNA)-tyrosine intermediate is tyrosine 298. Positions serine 328 to aspartate 356 are disordered. 3 consecutive C4-type zinc fingers follow at residues cysteine 577–cysteine 603, cysteine 617–cysteine 645, and cysteine 658–cysteine 681.

It belongs to the type IA topoisomerase family. As to quaternary structure, monomer. Mg(2+) serves as cofactor.

It carries out the reaction ATP-independent breakage of single-stranded DNA, followed by passage and rejoining.. Its function is as follows. Releases the supercoiling and torsional tension of DNA, which is introduced during the DNA replication and transcription, by transiently cleaving and rejoining one strand of the DNA duplex. Introduces a single-strand break via transesterification at a target site in duplex DNA. The scissile phosphodiester is attacked by the catalytic tyrosine of the enzyme, resulting in the formation of a DNA-(5'-phosphotyrosyl)-enzyme intermediate and the expulsion of a 3'-OH DNA strand. The free DNA strand then undergoes passage around the unbroken strand, thus removing DNA supercoils. Finally, in the religation step, the DNA 3'-OH attacks the covalent intermediate to expel the active-site tyrosine and restore the DNA phosphodiester backbone. This is DNA topoisomerase 1 from Staphylococcus aureus (strain USA300).